A 517-amino-acid polypeptide reads, in one-letter code: Putative thymidine phosphorylase (517 aa).

This sequence belongs to the thymidine/pyrimidine-nucleoside phosphorylase family. Type 2 subfamily.

The enzyme catalyses thymidine + phosphate = 2-deoxy-alpha-D-ribose 1-phosphate + thymine. This is Putative thymidine phosphorylase from Legionella pneumophila subsp. pneumophila (strain Philadelphia 1 / ATCC 33152 / DSM 7513).